We begin with the raw amino-acid sequence, 449 residues long: Biotin carboxylase (449 aa).

The Biotin carboxylation domain occupies 1 to 445 (MLDKIVIANR…NIHYLEKKLG (445 aa)). ATP is bound by residues lysine 116, lysine 159, 165–166 (GG), 201–204 (EKYL), histidine 209, and histidine 236. The ATP-grasp domain occupies 120–317 (IAAMKKAGVP…LIKEQLRIAA (198 aa)). Lysine 238 contributes to the hydrogencarbonate binding site. Positions 276 and 288 each coordinate ATP. Glutamate 276, glutamate 288, and asparagine 290 together coordinate Mg(2+). Mn(2+) is bound by residues glutamate 276, glutamate 288, and asparagine 290. Arginine 292, valine 295, and arginine 338 together coordinate hydrogencarbonate. The active site involves arginine 292. Arginine 338 is a biotin binding site.

Acetyl-CoA carboxylase is a heterohexamer of biotin carboxyl carrier protein, biotin carboxylase and the two subunits of carboxyl transferase in a 2:2 complex. Mg(2+) serves as cofactor. Mn(2+) is required as a cofactor.

It carries out the reaction N(6)-biotinyl-L-lysyl-[protein] + hydrogencarbonate + ATP = N(6)-carboxybiotinyl-L-lysyl-[protein] + ADP + phosphate + H(+). It functions in the pathway lipid metabolism; malonyl-CoA biosynthesis; malonyl-CoA from acetyl-CoA: step 1/1. Its function is as follows. This protein is a component of the acetyl coenzyme A carboxylase complex; first, biotin carboxylase catalyzes the carboxylation of the carrier protein and then the transcarboxylase transfers the carboxyl group to form malonyl-CoA. This chain is Biotin carboxylase (accC), found in Escherichia coli (strain K12).